Here is a 357-residue protein sequence, read N- to C-terminus: DNA integrity scanning protein DisA (357 aa).

A DAC domain is found at Arg3–Ser141. ATP is bound by residues Gly70, Leu88, and Thr101–Ser105.

It belongs to the DisA family. In terms of assembly, homooctamer. It depends on Mg(2+) as a cofactor.

The catalysed reaction is 2 ATP = 3',3'-c-di-AMP + 2 diphosphate. In terms of biological role, participates in a DNA-damage check-point. DisA forms globular foci that rapidly scan along the chromosomes searching for lesions. Also has diadenylate cyclase activity, catalyzing the condensation of 2 ATP molecules into cyclic di-AMP (c-di-AMP). c-di-AMP likely acts as a signaling molecule that may couple DNA integrity with a cellular process. This Mycobacterium avium (strain 104) protein is DNA integrity scanning protein DisA.